The sequence spans 301 residues: Immune-associated nucleotide-binding protein 5 (301 aa).

In terms of domain architecture, AIG1-type G spans 11–214 (EPVRNIVLVG…FTEENDLNEK (204 aa)). Positions 20–27 (GPTGNGKS) are G1. 20–28 (GPTGNGKSS) contributes to the GTP binding site. A G2 region spans residues 46–50 (CKTCK). The interval 63–66 (DTPG) is G3. A G4 region spans residues 133-136 (TGGD). Residues 172–174 (NNK) are G5. Asn173 is a GTP binding site.

It belongs to the TRAFAC class TrmE-Era-EngA-EngB-Septin-like GTPase superfamily. AIG1/Toc34/Toc159-like paraseptin GTPase family. IAN subfamily. In terms of tissue distribution, expressed in pollen, cotyledons and lateral roots.

The protein is Immune-associated nucleotide-binding protein 5 of Arabidopsis thaliana (Mouse-ear cress).